The following is a 344-amino-acid chain: N-acetyl-gamma-glutamyl-phosphate reductase (344 aa).

Residue cysteine 150 is part of the active site.

Belongs to the NAGSA dehydrogenase family. Type 1 subfamily.

The protein localises to the cytoplasm. The catalysed reaction is N-acetyl-L-glutamate 5-semialdehyde + phosphate + NADP(+) = N-acetyl-L-glutamyl 5-phosphate + NADPH + H(+). It functions in the pathway amino-acid biosynthesis; L-arginine biosynthesis; N(2)-acetyl-L-ornithine from L-glutamate: step 3/4. In terms of biological role, catalyzes the NADPH-dependent reduction of N-acetyl-5-glutamyl phosphate to yield N-acetyl-L-glutamate 5-semialdehyde. The chain is N-acetyl-gamma-glutamyl-phosphate reductase from Pseudomonas syringae pv. syringae (strain B728a).